The sequence spans 156 residues: Small ribosomal subunit protein uS7 (156 aa).

Belongs to the universal ribosomal protein uS7 family. As to quaternary structure, part of the 30S ribosomal subunit. Contacts proteins S9 and S11.

In terms of biological role, one of the primary rRNA binding proteins, it binds directly to 16S rRNA where it nucleates assembly of the head domain of the 30S subunit. Is located at the subunit interface close to the decoding center, probably blocks exit of the E-site tRNA. This chain is Small ribosomal subunit protein uS7, found in Kineococcus radiotolerans (strain ATCC BAA-149 / DSM 14245 / SRS30216).